A 1183-amino-acid chain; its full sequence is Spermatogenesis-associated protein 31G1 (1183 aa).

6 disordered regions span residues 109–153 (TPIG…FPTF), 469–555 (LMPA…SPWA), 661–686 (TVDD…SSEP), 843–884 (ASQG…VSEV), 973–1032 (CLHS…TGLL), and 1048–1087 (QKRG…PAEA). Residues 124–134 (CRSEGRPRATE) show a composition bias toward basic and acidic residues. A compositionally biased stretch (polar residues) spans 135–153 (TQEQVLIQSPSPSRSFPTF). Residues 487 to 509 (NPKERLSAPKDVRENLGYREHPH) show a composition bias toward basic and acidic residues. Over residues 671–685 (TGKNTDNTKKCSSSE) the composition is skewed to polar residues. Pro residues predominate over residues 847–858 (PNPPAVNPPQPT). The span at 975-984 (HSSSQPQAQA) shows a compositional bias: polar residues. The segment covering 993–1002 (QKSKRLKRKA) has biased composition (basic residues). Residues 1069-1079 (SPTNTRENNPA) are compositionally biased toward polar residues.

In terms of tissue distribution, expressed in kidney and testis. Expressed at lower levels in stomach, intestine, epididymis and ovary. Expressed at very low levels in heart and spleen.

Functionally, dispensable for normal development and fertility. This Mus musculus (Mouse) protein is Spermatogenesis-associated protein 31G1 (Spata31g1).